The primary structure comprises 526 residues: Peptide chain release factor 3 (526 aa).

In terms of domain architecture, tr-type G spans 8–277 (NKRRTFAIIS…GLTQWAPAPQ (270 aa)). GTP contacts are provided by residues 17 to 24 (SHPDAGKT), 85 to 89 (DTPGH), and 139 to 142 (NKLD).

The protein belongs to the TRAFAC class translation factor GTPase superfamily. Classic translation factor GTPase family. PrfC subfamily.

The protein localises to the cytoplasm. Increases the formation of ribosomal termination complexes and stimulates activities of RF-1 and RF-2. It binds guanine nucleotides and has strong preference for UGA stop codons. It may interact directly with the ribosome. The stimulation of RF-1 and RF-2 is significantly reduced by GTP and GDP, but not by GMP. The chain is Peptide chain release factor 3 from Histophilus somni (strain 129Pt) (Haemophilus somnus).